The following is a 425-amino-acid chain: Monoacylglycerol lipase ABHD2 (425 aa).

The Cytoplasmic segment spans residues 1-9 (MNAMLETPE). The chain crosses the membrane as a helical; Signal-anchor for type II membrane protein span at residues 10–30 (LPAVFDGVKLAAVAAVLYVIV). Over 31–425 (RCLNLKSPTA…DTEQVEADLE (395 aa)) the chain is Extracellular. Residues 128-382 (MVICPGIANH…HGGHLGFFEG (255 aa)) form the AB hydrolase-1 domain. N-linked (GlcNAc...) asparagine glycosylation is present at Asn136. The active-site Nucleophile is Ser207. Active-site charge relay system residues include Asp345 and His376.

This sequence belongs to the AB hydrolase superfamily. AB hydrolase 4 family. Present in sperm (at protein level).

Its subcellular location is the cell projection. The protein localises to the cilium. It localises to the flagellum membrane. The protein resides in the cell membrane. It carries out the reaction an acetyl ester + H2O = an aliphatic alcohol + acetate + H(+). The catalysed reaction is Hydrolyzes glycerol monoesters of long-chain fatty acids.. It catalyses the reaction a triacylglycerol + H2O = a diacylglycerol + a fatty acid + H(+). The enzyme catalyses 2-(5Z,8Z,11Z,14Z-eicosatetraenoyl)-glycerol + H2O = glycerol + (5Z,8Z,11Z,14Z)-eicosatetraenoate + H(+). It carries out the reaction a butanoate ester + H2O = an aliphatic alcohol + butanoate + H(+). The catalysed reaction is hexadecanoate ester + H2O = an aliphatic alcohol + hexadecanoate + H(+). Acylglycerol lipase activity is activated upon binding to progesterone. Its function is as follows. Progesterone-dependent acylglycerol lipase that catalyzes hydrolysis of endocannabinoid arachidonoylglycerol (AG) from cell membrane. Acts as a progesterone receptor: progesterone-binding activates the acylglycerol lipase activity, mediating degradation of 1-arachidonoylglycerol (1AG) and 2-arachidonoylglycerol (2AG) to glycerol and arachidonic acid (AA). Also displays an ester hydrolase activity against acetyl ester, butanoate ester and hexadecanoate ester. Plays a key role in sperm capacitation in response to progesterone by mediating degradation of 2AG, an inhibitor of the sperm calcium channel CatSper, leading to calcium influx via CatSper and sperm activation. May also play a role in smooth muscle cells migration. In Homo sapiens (Human), this protein is Monoacylglycerol lipase ABHD2.